A 152-amino-acid chain; its full sequence is Nucleoside diphosphate kinase B (152 aa).

The tract at residues Met1–Lys66 is interaction with AKAP13. ATP-binding residues include Lys12, Phe60, Arg88, Thr94, Arg105, and Asn115. His118 (pros-phosphohistidine intermediate) is an active-site residue.

Belongs to the NDK family. As to quaternary structure, hexamer of two different chains: An and B (A6, A5B, A4B2, A3B3, A2B4, AB5, B6). Interacts with CAPN8. Interacts with AKAP13. Interacts with ITGB1BP1 (via C-terminal domain region). Interacts with BCL2L10. The cofactor is Mg(2+).

Its subcellular location is the cytoplasm. The protein localises to the cell projection. It localises to the lamellipodium. It is found in the ruffle. The protein resides in the nucleus. The enzyme catalyses a 2'-deoxyribonucleoside 5'-diphosphate + ATP = a 2'-deoxyribonucleoside 5'-triphosphate + ADP. The catalysed reaction is a ribonucleoside 5'-diphosphate + ATP = a ribonucleoside 5'-triphosphate + ADP. It catalyses the reaction ATP + protein L-histidine = ADP + protein N-phospho-L-histidine.. Its function is as follows. Major role in the synthesis of nucleoside triphosphates other than ATP. The ATP gamma phosphate is transferred to the NDP beta phosphate via a ping-pong mechanism, using a phosphorylated active-site intermediate. Negatively regulates Rho activity by interacting with AKAP13/LBC. Acts as a transcriptional activator of the MYC gene; binds DNA non-specifically. Binds to both single-stranded guanine- and cytosine-rich strands within the nuclease hypersensitive element (NHE) III(1) region of the MYC gene promoter. Does not bind to duplex NHE III(1). Has G-quadruplex (G4) DNA-binding activity, which is independent of its nucleotide-binding and kinase activity. Binds both folded and unfolded G4 with similar low nanomolar affinities. Stabilizes folded G4s regardless of whether they are prefolded or not. Exhibits histidine protein kinase activity. The polypeptide is Nucleoside diphosphate kinase B (NME2) (Bos taurus (Bovine)).